A 223-amino-acid polypeptide reads, in one-letter code: MESGAYGVAEAGGSFDLRPFLTQPQVVARALCLVFALIVFSCIYGEGYSNTHKSKQMYCVFNHNEDACRYGSAIGVLAFLASAFLVVDAYFPQISNATDRKYLVIGDLLFSALWTFLWFVGFCFLTNQWAVTDPEDVLVGADSARAAITFSFFSIFSWGVLASLTYQRYKAGVDDFIQNYVDPSPDPNTAYASYPGASVDNYQQPPFTQNAETTEGYQPPPVY.

At Met-1 the chain carries N-acetylmethionine. Phosphoserine is present on Ser-3. Residues 20–170 enclose the MARVEL domain; sequence FLTQPQVVAR…LASLTYQRYK (151 aa). The next 4 membrane-spanning stretches (helical) occupy residues 26–46, 71–91, 104–124, and 146–166; these read VVARALCLVFALIVFSCIYGE, GSAIGVLAFLASAFLVVDAYF, VIGDLLFSALWTFLWFVGFCF, and AAITFSFFSIFSWGVLASLTY. A disordered region spans residues 197-223; that stretch reads ASVDNYQQPPFTQNAETTEGYQPPPVY. Residues 200-216 show a composition bias toward polar residues; sequence DNYQQPPFTQNAETTEG.

It belongs to the synaptogyrin family.

The protein resides in the membrane. This is Putative synaptogyrin-2 like protein from Homo sapiens (Human).